A 299-amino-acid chain; its full sequence is Probable lipid kinase YegS (299 aa).

Residues 2–133 (ANFPASLLIL…IDMAMVNDKT (132 aa)) form the DAGKc domain. Residues Thr-40, 66–72 (GDGTINE), and Thr-95 contribute to the ATP site. Mg(2+)-binding residues include Leu-215, Asp-218, and Leu-220. Glu-271 functions as the Proton acceptor in the catalytic mechanism.

The protein belongs to the diacylglycerol/lipid kinase family. YegS lipid kinase subfamily. It depends on Mg(2+) as a cofactor. The cofactor is Ca(2+).

The protein resides in the cytoplasm. Functionally, probably phosphorylates lipids; the in vivo substrate is unknown. The protein is Probable lipid kinase YegS of Salmonella choleraesuis (strain SC-B67).